The following is a 550-amino-acid chain: Glucose-6-phosphate isomerase (550 aa).

Residue Glu-357 is the Proton donor of the active site. Residues His-389 and Lys-509 contribute to the active site.

This sequence belongs to the GPI family.

Its subcellular location is the cytoplasm. The catalysed reaction is alpha-D-glucose 6-phosphate = beta-D-fructose 6-phosphate. The protein operates within carbohydrate biosynthesis; gluconeogenesis. It participates in carbohydrate degradation; glycolysis; D-glyceraldehyde 3-phosphate and glycerone phosphate from D-glucose: step 2/4. Its function is as follows. Catalyzes the reversible isomerization of glucose-6-phosphate to fructose-6-phosphate. This is Glucose-6-phosphate isomerase from Anaeromyxobacter dehalogenans (strain 2CP-C).